Reading from the N-terminus, the 95-residue chain is MDARDIIRRPIITEASMAQTERKRYVFEVDTRATKPEIKKAIEEIFEVKVSGLNTANVRGKKKRQGRYVGYTRKLKKATVTLSKDSKDIQIFNEG.

It belongs to the universal ribosomal protein uL23 family. Part of the 50S ribosomal subunit. Contacts protein L29, and trigger factor when it is bound to the ribosome.

Functionally, one of the early assembly proteins it binds 23S rRNA. One of the proteins that surrounds the polypeptide exit tunnel on the outside of the ribosome. Forms the main docking site for trigger factor binding to the ribosome. The polypeptide is Large ribosomal subunit protein uL23 (Leuconostoc mesenteroides subsp. mesenteroides (strain ATCC 8293 / DSM 20343 / BCRC 11652 / CCM 1803 / JCM 6124 / NCDO 523 / NBRC 100496 / NCIMB 8023 / NCTC 12954 / NRRL B-1118 / 37Y)).